We begin with the raw amino-acid sequence, 379 residues long: Sialidase-2 (379 aa).

The FRIP motif signature appears at 20 to 23 (YRIP). Substrate is bound by residues Arg21 and Arg41. The active-site Proton acceptor is Asp46. The stretch at 127-138 (VSSTDHGRTWSP) is one BNR 1 repeat. Substrate is bound by residues Tyr179 and Tyr181. A BNR 2 repeat occupies 197-208 (FISLDHGHTWKL). Residues Glu218, Arg237, and Arg303 each contribute to the substrate site. Residue Arg303 is part of the active site. Tyr333 serves as the catalytic Nucleophile. The active site involves Glu354.

This sequence belongs to the glycosyl hydrolase 33 family. Highly expressed in heart.

The protein localises to the cytoplasm. Its subcellular location is the cytosol. The enzyme catalyses Hydrolysis of alpha-(2-&gt;3)-, alpha-(2-&gt;6)-, alpha-(2-&gt;8)- glycosidic linkages of terminal sialic acid residues in oligosaccharides, glycoproteins, glycolipids, colominic acid and synthetic substrates.. The catalysed reaction is a ganglioside GD1a + H2O = a ganglioside GM1 + N-acetylneuraminate. It carries out the reaction a ganglioside GM1 + H2O = a ganglioside GA1 + N-acetylneuraminate. It catalyses the reaction a ganglioside GT1b + H2O = a ganglioside GD1b + N-acetylneuraminate. The enzyme catalyses a ganglioside GD1b + H2O = a ganglioside GM1 + N-acetylneuraminate. The catalysed reaction is a ganglioside GD3 + H2O = a ganglioside GM3 + N-acetylneuraminate. It carries out the reaction a ganglioside GM3 + H2O = a beta-D-galactosyl-(1-&gt;4)-beta-D-glucosyl-(1&lt;-&gt;1)-ceramide + N-acetylneuraminate. It catalyses the reaction a ganglioside GM2 + H2O = a ganglioside GA2 + N-acetylneuraminate. The enzyme catalyses a neolactoside IV(3)-alpha-NeuAc-nLc4Cer(d18:1(4E)) + H2O = a neolactoside nLc4Cer(d18:1(4E)) + N-acetylneuraminate. The catalysed reaction is N-acetyl-alpha-neuraminosyl-(2-&gt;3)-beta-D-galactosyl-(1-&gt;4)-D-glucose + H2O = lactose + N-acetylneuraminate. In terms of biological role, exo-alpha-sialidase that catalyzes the hydrolytic cleavage of the terminal sialic acid (N-acetylneuraminic acid, Neu5Ac) of a glycan moiety in the catabolism of glycolipids, glycoproteins and oligosacharides. Recognizes sialyl linkage positions of the glycan moiety as well as the supramolecular organization of the sialoglycoconjugate. Displays preference for alpha-(2-&gt;3)-sialylated GD1a and GT1B gangliosides over alpha-(2-&gt;8)-sialylated GD1b, in both monomeric forms and micelles. Hydrolyzes exclusively monomeric GM1 ganglioside, but has no activity toward the miscellar form. Has lower sialidase activity for glycoproteins such as fetuin and TF/transferrin that carry a mixture of alpha-(2-&gt;3) and alpha-(2-&gt;6)-sialyl linkages. Cleaves milk oligosaccharide alpha-(2-&gt;3)-sialyllactose, but is inactive toward isomer alpha-(2-&gt;6)-sialyllactose isomer. Has no activity toward colominic acid, a homomer of alpha-(2-&gt;8)-linked Neu5Ac residues. In Mus musculus (Mouse), this protein is Sialidase-2 (Neu2).